The sequence spans 283 residues: Protein/nucleic acid deglycase HchA (283 aa).

3 residues coordinate Zn(2+): H86, E91, and H123. C185 functions as the Nucleophile in the catalytic mechanism.

Belongs to the peptidase C56 family. HchA subfamily. Homodimer.

It localises to the cytoplasm. The catalysed reaction is N(omega)-(1-hydroxy-2-oxopropyl)-L-arginyl-[protein] + H2O = lactate + L-arginyl-[protein] + H(+). It catalyses the reaction N(6)-(1-hydroxy-2-oxopropyl)-L-lysyl-[protein] + H2O = lactate + L-lysyl-[protein] + H(+). The enzyme catalyses S-(1-hydroxy-2-oxopropyl)-L-cysteinyl-[protein] + H2O = lactate + L-cysteinyl-[protein] + H(+). It carries out the reaction N(omega)-(1-hydroxy-2-oxoethyl)-L-arginyl-[protein] + H2O = L-arginyl-[protein] + glycolate + H(+). The catalysed reaction is N(6)-(1-hydroxy-2-oxoethyl)-L-lysyl-[protein] + H2O = glycolate + L-lysyl-[protein] + H(+). It catalyses the reaction S-(1-hydroxy-2-oxoethyl)-L-cysteinyl-[protein] + H2O = glycolate + L-cysteinyl-[protein] + H(+). The enzyme catalyses N(2)-(1-hydroxy-2-oxopropyl)-dGTP + H2O = lactate + dGTP + H(+). It carries out the reaction N(2)-(1-hydroxy-2-oxopropyl)-GTP + H2O = lactate + GTP + H(+). The catalysed reaction is N(2)-(1-hydroxy-2-oxopropyl)-GDP + H2O = lactate + GDP + H(+). It catalyses the reaction N(2)-(1-hydroxy-2-oxopropyl)-GMP + H2O = lactate + GMP + H(+). The enzyme catalyses N(2)-(1-hydroxy-2-oxoethyl)-dGTP + H2O = dGTP + glycolate + H(+). It carries out the reaction N(2)-(1-hydroxy-2-oxoethyl)-GTP + H2O = glycolate + GTP + H(+). The catalysed reaction is N(2)-(1-hydroxy-2-oxoethyl)-GDP + H2O = glycolate + GDP + H(+). It catalyses the reaction N(2)-(1-hydroxy-2-oxoethyl)-GMP + H2O = glycolate + GMP + H(+). The enzyme catalyses an N(2)-(1-hydroxy-2-oxopropyl)-guanosine in RNA + H2O = a guanosine in RNA + lactate + H(+). It carries out the reaction an N(2)-(1-hydroxy-2-oxopropyl)-2'-deoxyguanosine in DNA + H2O = a 2'-deoxyguanosine in DNA + lactate + H(+). The catalysed reaction is an N(2)-(1-hydroxy-2-oxoethyl)-guanosine in RNA + H2O = a guanosine in RNA + glycolate + H(+). It catalyses the reaction an N(2)-(1-hydroxy-2-oxoethyl)-2'-deoxyguanosine in DNA + H2O = a 2'-deoxyguanosine in DNA + glycolate + H(+). In terms of biological role, protein and nucleotide deglycase that catalyzes the deglycation of the Maillard adducts formed between amino groups of proteins or nucleotides and reactive carbonyl groups of glyoxals. Thus, functions as a protein deglycase that repairs methylglyoxal- and glyoxal-glycated proteins, and releases repaired proteins and lactate or glycolate, respectively. Deglycates cysteine, arginine and lysine residues in proteins, and thus reactivates these proteins by reversing glycation by glyoxals. Acts on early glycation intermediates (hemithioacetals and aminocarbinols), preventing the formation of Schiff bases and advanced glycation endproducts (AGE). Also functions as a nucleotide deglycase able to repair glycated guanine in the free nucleotide pool (GTP, GDP, GMP, dGTP) and in DNA and RNA. Is thus involved in a major nucleotide repair system named guanine glycation repair (GG repair), dedicated to reversing methylglyoxal and glyoxal damage via nucleotide sanitization and direct nucleic acid repair. Plays an important role in protecting cells from carbonyl stress. This is Protein/nucleic acid deglycase HchA from Escherichia coli (strain K12 / MC4100 / BW2952).